Reading from the N-terminus, the 337-residue chain is Phosphatidate cytidylyltransferase, mitochondrial (337 aa).

It belongs to the TAM41 family. Mg(2+) serves as cofactor. As to expression, brain and liver.

It localises to the mitochondrion inner membrane. The catalysed reaction is a 1,2-diacyl-sn-glycero-3-phosphate + CTP + H(+) = a CDP-1,2-diacyl-sn-glycerol + diphosphate. It participates in phospholipid metabolism; CDP-diacylglycerol biosynthesis; CDP-diacylglycerol from sn-glycerol 3-phosphate: step 3/3. In terms of biological role, catalyzes the conversion of phosphatidic acid (PA) to CDP-diacylglycerol (CDP-DAG), an essential intermediate in the synthesis of phosphatidylglycerol, cardiolipin and phosphatidylinositol. The chain is Phosphatidate cytidylyltransferase, mitochondrial (Tamm41) from Rattus norvegicus (Rat).